We begin with the raw amino-acid sequence, 159 residues long: ATP synthase subunit b (159 aa).

The helical transmembrane segment at 2-22 threads the bilayer; the sequence is NISIPQIIAAILNFIILLLIV.

Belongs to the ATPase B chain family. In terms of assembly, F-type ATPases have 2 components, F(1) - the catalytic core - and F(0) - the membrane proton channel. F(1) has five subunits: alpha(3), beta(3), gamma(1), delta(1), epsilon(1). F(0) has three main subunits: a(1), b(2) and c(10-14). The alpha and beta chains form an alternating ring which encloses part of the gamma chain. F(1) is attached to F(0) by a central stalk formed by the gamma and epsilon chains, while a peripheral stalk is formed by the delta and b chains.

Its subcellular location is the cell membrane. Its function is as follows. F(1)F(0) ATP synthase produces ATP from ADP in the presence of a proton or sodium gradient. F-type ATPases consist of two structural domains, F(1) containing the extramembraneous catalytic core and F(0) containing the membrane proton channel, linked together by a central stalk and a peripheral stalk. During catalysis, ATP synthesis in the catalytic domain of F(1) is coupled via a rotary mechanism of the central stalk subunits to proton translocation. In terms of biological role, component of the F(0) channel, it forms part of the peripheral stalk, linking F(1) to F(0). This is ATP synthase subunit b from Clostridium botulinum (strain Okra / Type B1).